Consider the following 197-residue polypeptide: Probable thymidylate kinase (197 aa).

7–14 (GLDGSGKT) is an ATP binding site.

Belongs to the thymidylate kinase family.

It catalyses the reaction dTMP + ATP = dTDP + ADP. In Halorubrum lacusprofundi (strain ATCC 49239 / DSM 5036 / JCM 8891 / ACAM 34), this protein is Probable thymidylate kinase.